We begin with the raw amino-acid sequence, 240 residues long: Agamous-like MADS-box protein AGL16 (240 aa).

Positions 1 to 61 (MGRGKIAIKR…GRLYDFSSSS (61 aa)) constitute an MADS-box domain. The K-box domain maps to 86 to 176 (IQFWQKEAAI…HKKVNLMHQQ (91 aa)).

As to quaternary structure, homodimer. Interacts with AGL15, AGL24, AP1, AGL6, AG, AGL1, AGL11, AGL5, SEP3, SEP1, AGL63, AGL14, SOC1 and AGL21. Interacts with AGL63. Interacts with SVP. In terms of tissue distribution, expressed at high levels in leaves, moderate levels in roots, seedlings and stems, and at low levels in flowers, pollen and siliques. Accumulates in leaf guard cells and trichomes. Also present in epidermal cells of roots. Expressed in mature guard cells.

Its subcellular location is the nucleus. Functionally, probable transcription factor involved in the regulation of flowering time in long-day photoperiod. Participates in the repression of FT expression and floral transition, by interacting closely with the FLC-SVP pathways. Functions in the satellite meristemoid lineage of stomatal development. The polypeptide is Agamous-like MADS-box protein AGL16 (AGL16) (Arabidopsis thaliana (Mouse-ear cress)).